Consider the following 32-residue polypeptide: Small ribosomal subunit protein uS19 (32 aa).

Belongs to the universal ribosomal protein uS19 family.

In terms of biological role, protein S19 forms a complex with S13 that binds strongly to the 16S ribosomal RNA. The protein is Small ribosomal subunit protein uS19 (rpsS) of Yersinia enterocolitica.